The following is a 249-amino-acid chain: Ubiquinone/menaquinone biosynthesis C-methyltransferase UbiE (249 aa).

S-adenosyl-L-methionine contacts are provided by residues Thr72, Asp93, and 121 to 122; that span reads DA.

This sequence belongs to the class I-like SAM-binding methyltransferase superfamily. MenG/UbiE family.

It catalyses the reaction a 2-demethylmenaquinol + S-adenosyl-L-methionine = a menaquinol + S-adenosyl-L-homocysteine + H(+). It carries out the reaction a 2-methoxy-6-(all-trans-polyprenyl)benzene-1,4-diol + S-adenosyl-L-methionine = a 5-methoxy-2-methyl-3-(all-trans-polyprenyl)benzene-1,4-diol + S-adenosyl-L-homocysteine + H(+). It functions in the pathway quinol/quinone metabolism; menaquinone biosynthesis; menaquinol from 1,4-dihydroxy-2-naphthoate: step 2/2. The protein operates within cofactor biosynthesis; ubiquinone biosynthesis. Functionally, methyltransferase required for the conversion of demethylmenaquinol (DMKH2) to menaquinol (MKH2) and the conversion of 2-polyprenyl-6-methoxy-1,4-benzoquinol (DDMQH2) to 2-polyprenyl-3-methyl-6-methoxy-1,4-benzoquinol (DMQH2). This Cellvibrio japonicus (strain Ueda107) (Pseudomonas fluorescens subsp. cellulosa) protein is Ubiquinone/menaquinone biosynthesis C-methyltransferase UbiE.